The primary structure comprises 457 residues: Argininosuccinate lyase (457 aa).

Belongs to the lyase 1 family. Argininosuccinate lyase subfamily.

The protein localises to the cytoplasm. It carries out the reaction 2-(N(omega)-L-arginino)succinate = fumarate + L-arginine. The protein operates within amino-acid biosynthesis; L-arginine biosynthesis; L-arginine from L-ornithine and carbamoyl phosphate: step 3/3. This Psychrobacter cryohalolentis (strain ATCC BAA-1226 / DSM 17306 / VKM B-2378 / K5) protein is Argininosuccinate lyase.